A 342-amino-acid polypeptide reads, in one-letter code: Dihydroorotate dehydrogenase (quinone) (342 aa).

FMN contacts are provided by residues 60–64 (AGLDK) and threonine 84. Position 64 (lysine 64) interacts with substrate. 109–113 (NRMGF) contacts substrate. Asparagine 137 and asparagine 170 together coordinate FMN. A substrate-binding site is contributed by asparagine 170. The Nucleophile role is filled by serine 173. A substrate-binding site is contributed by asparagine 175. The FMN site is built by lysine 215 and threonine 243. 244-245 (NT) provides a ligand contact to substrate. FMN contacts are provided by residues glycine 266, glycine 295, and 316–317 (YS).

It belongs to the dihydroorotate dehydrogenase family. Type 2 subfamily. Monomer. It depends on FMN as a cofactor.

It localises to the cell membrane. It catalyses the reaction (S)-dihydroorotate + a quinone = orotate + a quinol. It functions in the pathway pyrimidine metabolism; UMP biosynthesis via de novo pathway; orotate from (S)-dihydroorotate (quinone route): step 1/1. Functionally, catalyzes the conversion of dihydroorotate to orotate with quinone as electron acceptor. The sequence is that of Dihydroorotate dehydrogenase (quinone) from Nitrosomonas europaea (strain ATCC 19718 / CIP 103999 / KCTC 2705 / NBRC 14298).